The following is a 664-amino-acid chain: UvrABC system protein B (664 aa).

The Helicase ATP-binding domain occupies E23–R180. G36–T43 serves as a coordination point for ATP. The Beta-hairpin signature appears at Y89–I112. The 160-residue stretch at D429 to L588 folds into the Helicase C-terminal domain. Residues E622–E657 form the UVR domain.

This sequence belongs to the UvrB family. As to quaternary structure, forms a heterotetramer with UvrA during the search for lesions. Interacts with UvrC in an incision complex.

It is found in the cytoplasm. Functionally, the UvrABC repair system catalyzes the recognition and processing of DNA lesions. A damage recognition complex composed of 2 UvrA and 2 UvrB subunits scans DNA for abnormalities. Upon binding of the UvrA(2)B(2) complex to a putative damaged site, the DNA wraps around one UvrB monomer. DNA wrap is dependent on ATP binding by UvrB and probably causes local melting of the DNA helix, facilitating insertion of UvrB beta-hairpin between the DNA strands. Then UvrB probes one DNA strand for the presence of a lesion. If a lesion is found the UvrA subunits dissociate and the UvrB-DNA preincision complex is formed. This complex is subsequently bound by UvrC and the second UvrB is released. If no lesion is found, the DNA wraps around the other UvrB subunit that will check the other stand for damage. The protein is UvrABC system protein B of Thermotoga petrophila (strain ATCC BAA-488 / DSM 13995 / JCM 10881 / RKU-1).